A 484-amino-acid polypeptide reads, in one-letter code: MARTIMLQGTGSDVGKTVLVAGLCRLAANAGLTVRPFKPQNMSNNAAVADDGGEIGRAQWLQSMAARTPSSVHMNPVLLKPQSENGSQIIVQGRVFGQAKGRDYQRLKPQLLGAVLESFENVCAGADLVVVEGAGSPAEINLRTGDIANMGFATKAGVPVVLVGDINRGGVIASLVGTQAILDEGDRAMIAGYLINKFRGDVSLFDDGIRAIEGFTGWPCFGVVPWLQAATRLPAEDSVVLERLARSGTGALKIAVPMLPRIANFDDLDPLRAEADVELVFVRGGERLPADASLVILPGSKSTISDLADLRVQGWDRDLAAHVRRGGRVIGICGGYQMLGRTVRDPLGIEGGRIEAAGLALLDVETEMAPEKTVRNSQARSSEYDVSLAGYQIHLGVTRGPDCVRPSAIIDGAPDGALSADGRIMGTYLHGLFGSDAYRARLLQSFGLSGERRNYRDSVEQALDEIAGELERHLDPHWLAGLLG.

The GATase cobBQ-type domain maps to 251-438 (ALKIAVPMLP…LHGLFGSDAY (188 aa)). The active-site Nucleophile is Cys333. The active site involves His430.

The protein belongs to the CobB/CobQ family. CobQ subfamily.

It functions in the pathway cofactor biosynthesis; adenosylcobalamin biosynthesis. Its function is as follows. Catalyzes amidations at positions B, D, E, and G on adenosylcobyrinic A,C-diamide. NH(2) groups are provided by glutamine, and one molecule of ATP is hydrogenolyzed for each amidation. This chain is Cobyric acid synthase, found in Rhizobium etli (strain ATCC 51251 / DSM 11541 / JCM 21823 / NBRC 15573 / CFN 42).